Here is a 310-residue protein sequence, read N- to C-terminus: Ribonuclease HIII (310 aa).

The 217-residue stretch at tyrosine 91 to lysine 307 folds into the RNase H type-2 domain. Residues aspartate 97, glutamate 98, and aspartate 202 each coordinate a divalent metal cation.

The protein belongs to the RNase HII family. RnhC subfamily. Requires Mn(2+) as cofactor. The cofactor is Mg(2+).

The protein resides in the cytoplasm. It catalyses the reaction Endonucleolytic cleavage to 5'-phosphomonoester.. In terms of biological role, endonuclease that specifically degrades the RNA of RNA-DNA hybrids. The polypeptide is Ribonuclease HIII (Staphylococcus haemolyticus (strain JCSC1435)).